Reading from the N-terminus, the 257-residue chain is tRNA pseudouridine synthase A (257 aa).

Residue Asp-53 is the Nucleophile of the active site. Substrate is bound at residue Tyr-111.

This sequence belongs to the tRNA pseudouridine synthase TruA family. Homodimer.

The catalysed reaction is uridine(38/39/40) in tRNA = pseudouridine(38/39/40) in tRNA. Its function is as follows. Formation of pseudouridine at positions 38, 39 and 40 in the anticodon stem and loop of transfer RNAs. The sequence is that of tRNA pseudouridine synthase A from Xanthomonas euvesicatoria pv. vesicatoria (strain 85-10) (Xanthomonas campestris pv. vesicatoria).